A 502-amino-acid chain; its full sequence is UDP-N-acetylmuramoylalanine--D-glutamate ligase (502 aa).

129-135 (GTNGKTT) contacts ATP. The segment at 288–307 (APDETTSRRRKRDGAHTPDI) is disordered.

Belongs to the MurCDEF family.

It is found in the cytoplasm. It catalyses the reaction UDP-N-acetyl-alpha-D-muramoyl-L-alanine + D-glutamate + ATP = UDP-N-acetyl-alpha-D-muramoyl-L-alanyl-D-glutamate + ADP + phosphate + H(+). The protein operates within cell wall biogenesis; peptidoglycan biosynthesis. Functionally, cell wall formation. Catalyzes the addition of glutamate to the nucleotide precursor UDP-N-acetylmuramoyl-L-alanine (UMA). This Burkholderia ambifaria (strain ATCC BAA-244 / DSM 16087 / CCUG 44356 / LMG 19182 / AMMD) (Burkholderia cepacia (strain AMMD)) protein is UDP-N-acetylmuramoylalanine--D-glutamate ligase.